An 842-amino-acid chain; its full sequence is Leucine--tRNA ligase (842 aa).

Residues 62–72 (PYPSGDLHMGH) carry the 'HIGH' region motif. The segment at 390–414 (GDEDPAETGVATAGEGTLKNSGELD) is disordered. Positions 607 to 611 (AMSKS) match the 'KMSKS' region motif. Position 610 (Lys-610) interacts with ATP.

Belongs to the class-I aminoacyl-tRNA synthetase family.

The protein localises to the cytoplasm. The enzyme catalyses tRNA(Leu) + L-leucine + ATP = L-leucyl-tRNA(Leu) + AMP + diphosphate. The polypeptide is Leucine--tRNA ligase (Paenarthrobacter aurescens (strain TC1)).